Here is a 94-residue protein sequence, read N- to C-terminus: Venom protein 59.1 (94 aa).

An N-terminal signal peptide occupies residues 1-22 (MNSREMFCVFILFASFFYCSYA). Disulfide bonds link cysteine 19–cysteine 47, cysteine 26–cysteine 49, cysteine 32–cysteine 50, cysteine 38–cysteine 53, cysteine 61–cysteine 76, and cysteine 70–cysteine 91. In terms of domain architecture, IGFBP N-terminal spans 23-94 (EQECNCDKSC…GEALEICLRA (72 aa)).

In terms of tissue distribution, expressed by the venom gland.

It is found in the secreted. The chain is Venom protein 59.1 from Lychas mucronatus (Chinese swimming scorpion).